A 164-amino-acid polypeptide reads, in one-letter code: 6,7-dimethyl-8-ribityllumazine synthase (164 aa).

Residues Phe-24, 58-60, and 82-84 each bind 5-amino-6-(D-ribitylamino)uracil; these read ALE and AVI. 87–88 is a (2S)-2-hydroxy-3-oxobutyl phosphate binding site; the sequence is ET. His-90 (proton donor) is an active-site residue. Asn-115 is a 5-amino-6-(D-ribitylamino)uracil binding site. Arg-129 is a (2S)-2-hydroxy-3-oxobutyl phosphate binding site.

Belongs to the DMRL synthase family.

The enzyme catalyses (2S)-2-hydroxy-3-oxobutyl phosphate + 5-amino-6-(D-ribitylamino)uracil = 6,7-dimethyl-8-(1-D-ribityl)lumazine + phosphate + 2 H2O + H(+). It participates in cofactor biosynthesis; riboflavin biosynthesis; riboflavin from 2-hydroxy-3-oxobutyl phosphate and 5-amino-6-(D-ribitylamino)uracil: step 1/2. Catalyzes the formation of 6,7-dimethyl-8-ribityllumazine by condensation of 5-amino-6-(D-ribitylamino)uracil with 3,4-dihydroxy-2-butanone 4-phosphate. This is the penultimate step in the biosynthesis of riboflavin. In Ralstonia nicotianae (strain ATCC BAA-1114 / GMI1000) (Ralstonia solanacearum), this protein is 6,7-dimethyl-8-ribityllumazine synthase.